The following is a 242-amino-acid chain: DNA repair protein RecO (242 aa).

Belongs to the RecO family.

Involved in DNA repair and RecF pathway recombination. In Methylococcus capsulatus (strain ATCC 33009 / NCIMB 11132 / Bath), this protein is DNA repair protein RecO.